The chain runs to 233 residues: UPF0128 protein MJ1463 (233 aa).

It belongs to the UPF0128 family.

The sequence is that of UPF0128 protein MJ1463 from Methanocaldococcus jannaschii (strain ATCC 43067 / DSM 2661 / JAL-1 / JCM 10045 / NBRC 100440) (Methanococcus jannaschii).